The primary structure comprises 152 residues: Keratin, high-sulfur matrix protein, B2C (152 aa).

Position 2 is an N-acetylalanine (Ala2). Repeats lie at residues 27–36 (STCSQTSCCQ), 37–46 (PTSIQTSCCQ), and 47–56 (PTCLQTSGCE).

Functionally, the keratin products of mammalian epidermal derivatives such as wool and hair consist of microfibrils embedded in a rigid matrix of other proteins. The matrix proteins include the high-sulfur and high-tyrosine keratins, having molecular weights of 6-20 kDa, whereas the microfibrils contain the larger, low-sulfur keratins (40-56 kDa). This chain is Keratin, high-sulfur matrix protein, B2C, found in Ovis aries (Sheep).